The primary structure comprises 550 residues: Chaperonin GroEL (550 aa).

ATP is bound by residues 29–32 (TAGP), K50, 86–90 (DGTTT), G416, and D498.

This sequence belongs to the chaperonin (HSP60) family. Forms a cylinder of 14 subunits composed of two heptameric rings stacked back-to-back. Interacts with the co-chaperonin GroES.

It localises to the cytoplasm. It catalyses the reaction ATP + H2O + a folded polypeptide = ADP + phosphate + an unfolded polypeptide.. Its function is as follows. Together with its co-chaperonin GroES, plays an essential role in assisting protein folding. The GroEL-GroES system forms a nano-cage that allows encapsulation of the non-native substrate proteins and provides a physical environment optimized to promote and accelerate protein folding. In Anaplasma phagocytophilum (strain HZ), this protein is Chaperonin GroEL.